The primary structure comprises 292 residues: Small ribosomal subunit biogenesis GTPase RsgA (292 aa).

One can recognise a CP-type G domain in the interval 64–221 (RSELFRPAVA…LVDTPGFSSL (158 aa)). GTP is bound by residues 113-116 (NKMD) and 164-172 (GPSGVGKST). Zn(2+)-binding residues include Cys-245, Cys-250, His-252, and Cys-258.

Belongs to the TRAFAC class YlqF/YawG GTPase family. RsgA subfamily. Monomer. Associates with 30S ribosomal subunit, binds 16S rRNA. Zn(2+) is required as a cofactor.

The protein resides in the cytoplasm. One of several proteins that assist in the late maturation steps of the functional core of the 30S ribosomal subunit. Helps release RbfA from mature subunits. May play a role in the assembly of ribosomal proteins into the subunit. Circularly permuted GTPase that catalyzes slow GTP hydrolysis, GTPase activity is stimulated by the 30S ribosomal subunit. In Clostridium botulinum (strain ATCC 19397 / Type A), this protein is Small ribosomal subunit biogenesis GTPase RsgA.